Here is an 817-residue protein sequence, read N- to C-terminus: Lon protease (817 aa).

Residues 44-239 (LPILPLRNTV…ETLRYMNVEL (196 aa)) enclose the Lon N-terminal domain. An ATP-binding site is contributed by 390-397 (GPPGVGKT). Residues 626 to 807 (NDVAGVVTGL…SEVLAIALTD (182 aa)) enclose the Lon proteolytic domain. Residues Ser-713 and Lys-756 contribute to the active site.

Belongs to the peptidase S16 family. Homohexamer. Organized in a ring with a central cavity.

It is found in the cytoplasm. The enzyme catalyses Hydrolysis of proteins in presence of ATP.. In terms of biological role, ATP-dependent serine protease that mediates the selective degradation of mutant and abnormal proteins as well as certain short-lived regulatory proteins. Required for cellular homeostasis and for survival from DNA damage and developmental changes induced by stress. Degrades polypeptides processively to yield small peptide fragments that are 5 to 10 amino acids long. Binds to DNA in a double-stranded, site-specific manner. The protein is Lon protease of Flavobacterium johnsoniae (strain ATCC 17061 / DSM 2064 / JCM 8514 / BCRC 14874 / CCUG 350202 / NBRC 14942 / NCIMB 11054 / UW101) (Cytophaga johnsonae).